A 235-amino-acid chain; its full sequence is Ubiquinone/menaquinone biosynthesis C-methyltransferase UbiE (235 aa).

Positions 60 and 81 each coordinate S-adenosyl-L-methionine.

The protein belongs to the class I-like SAM-binding methyltransferase superfamily. MenG/UbiE family.

It carries out the reaction a 2-demethylmenaquinol + S-adenosyl-L-methionine = a menaquinol + S-adenosyl-L-homocysteine + H(+). The enzyme catalyses a 2-methoxy-6-(all-trans-polyprenyl)benzene-1,4-diol + S-adenosyl-L-methionine = a 5-methoxy-2-methyl-3-(all-trans-polyprenyl)benzene-1,4-diol + S-adenosyl-L-homocysteine + H(+). The protein operates within quinol/quinone metabolism; menaquinone biosynthesis; menaquinol from 1,4-dihydroxy-2-naphthoate: step 2/2. It functions in the pathway cofactor biosynthesis; ubiquinone biosynthesis. Methyltransferase required for the conversion of demethylmenaquinol (DMKH2) to menaquinol (MKH2) and the conversion of 2-polyprenyl-6-methoxy-1,4-benzoquinol (DDMQH2) to 2-polyprenyl-3-methyl-6-methoxy-1,4-benzoquinol (DMQH2). The sequence is that of Ubiquinone/menaquinone biosynthesis C-methyltransferase UbiE from Geotalea uraniireducens (strain Rf4) (Geobacter uraniireducens).